A 143-amino-acid polypeptide reads, in one-letter code: Hemoglobin cathodic subunit alpha (143 aa).

At Ser-2 the chain carries N-acetylserine. The 142-residue stretch at 2-143 (SLTAKDKSLI…LGAALSDKYR (142 aa)) folds into the Globin domain. His-60 lines the O2 pocket. Position 89 (His-89) interacts with heme b.

Belongs to the globin family. Heterotetramer of two alpha chains and two beta chains. In terms of tissue distribution, red blood cells.

In terms of biological role, involved in oxygen transport from gills to the various peripheral tissues. This Anguilla anguilla (European freshwater eel) protein is Hemoglobin cathodic subunit alpha.